Consider the following 73-residue polypeptide: Biotin/lipoyl attachment protein (73 aa).

The region spanning 2 to 69 (TVSIQMAGNL…NEGDVLLELS (68 aa)) is the Biotinyl-binding domain. Lysine 35 is modified (N6-biotinyllysine; alternate). Position 35 is an N6-lipoyllysine; alternate (lysine 35).

In terms of processing, can be both biotinylated and lipoylated on Lys-35 upon overexpression in E.coli depending on the growth medium; the nature of the modification in situ in B.subtilis is unknown.

This Bacillus subtilis (strain 168) protein is Biotin/lipoyl attachment protein (yngHB).